The sequence spans 202 residues: Small ribosomal subunit protein uS5 (202 aa).

Residues 50 to 113 (LKQELLNVNI…REAKLNLIPV (64 aa)) enclose the S5 DRBM domain.

Belongs to the universal ribosomal protein uS5 family. Part of the 30S ribosomal subunit. Contacts protein S4.

Functionally, with S4 and S12 plays an important role in translational accuracy. In Pyrobaculum arsenaticum (strain DSM 13514 / JCM 11321 / PZ6), this protein is Small ribosomal subunit protein uS5.